A 154-amino-acid polypeptide reads, in one-letter code: 6,7-dimethyl-8-ribityllumazine synthase (154 aa).

5-amino-6-(D-ribitylamino)uracil contacts are provided by residues Trp22, 56–58 (AWE), and 80–82 (CVI). 85–86 (DT) is a binding site for (2S)-2-hydroxy-3-oxobutyl phosphate. His88 acts as the Proton donor in catalysis. Position 113 (Asn113) interacts with 5-amino-6-(D-ribitylamino)uracil. Arg127 contributes to the (2S)-2-hydroxy-3-oxobutyl phosphate binding site.

It belongs to the DMRL synthase family. As to quaternary structure, forms an icosahedral capsid composed of 60 subunits, arranged as a dodecamer of pentamers.

It catalyses the reaction (2S)-2-hydroxy-3-oxobutyl phosphate + 5-amino-6-(D-ribitylamino)uracil = 6,7-dimethyl-8-(1-D-ribityl)lumazine + phosphate + 2 H2O + H(+). Its pathway is cofactor biosynthesis; riboflavin biosynthesis; riboflavin from 2-hydroxy-3-oxobutyl phosphate and 5-amino-6-(D-ribitylamino)uracil: step 1/2. Catalyzes the formation of 6,7-dimethyl-8-ribityllumazine by condensation of 5-amino-6-(D-ribitylamino)uracil with 3,4-dihydroxy-2-butanone 4-phosphate. This is the penultimate step in the biosynthesis of riboflavin. This chain is 6,7-dimethyl-8-ribityllumazine synthase, found in Xanthomonas axonopodis pv. citri (strain 306).